The sequence spans 32 residues: Alcohol dehydrogenase-related 31 kDa protein (32 aa).

Residue Tyr-11–Ala-32 participates in NAD(+) binding.

Belongs to the short-chain dehydrogenases/reductases (SDR) family.

The protein is Alcohol dehydrogenase-related 31 kDa protein (Adhr) of Drosophila yakuba (Fruit fly).